Reading from the N-terminus, the 1410-residue chain is MGGPLTAAGGRGDGGAKAVEPLRPPPPPDPKTMARWYQLEALERAVRGNTLAFLETGSGKTLIAVMLLRAYAHRVRRPDSRRFAVFLVPTVVLVGQQARVVEQHTDLVVKQFCGEMGVDFWDAATWRSQLEDGEVLVMTPQILLDNLRHSFFRLQDIALLIFDECHHARGNTPYACIFKEFYHPQLNSSASDPLPRIFGMSASLIYSKDLNPHNYSKQISEIENLMNSKVYTVDSESALSEYIPFASTKIVDFDDSNISSELHANILSCLNRLNKKHIEALDRKLHGSSLENAKQRISKLHHTFVYCLYNLGVWLAAKAAEVQSYEENSLSFWGETLDKNVEGFIRNYSEEVHRELSCFLKNGHIGEKFPADSQDGILTPKVHCLIRTLLQYRHMQDLRCIVFVERVITSIVLEHLLSSIHQMSGWNVKHMAGSRPGLLSQSRKNHTEIVESFRKGKVHIIIATQILEEGLDVPSCNLVIRFDPSATVCSFIQSRGRARMENSDYLLLVGRGDVEAQTNAEKFLASGQIMREESLRLGSISCQPLENTLCEDTYYRVESTRAIVTLNSSVPLIHFFCSKLPSDEYFNPLPRFDIDKASGTCTLHLPKSSPVQTVNVEGEGSILKETVCLKACQELHAIGALTDSLLPELDVPCDEEPDIVVENKIEQPSYFPEEFVDNWRSFSRLGIYYCYKISLEGCPKTASPTDILLALKCDLGSDFTSSSFKLPGGQDNASVTMKYVGIIHLNQEQVIIARRFQTTILSFLIGDDHLEVSNGIKYFHEMQVPIGVVYLLLPLVSGRIDWCSMKFSSSPIYEANNKHMTHCHSCKDIDLLQTKDGPFCRCILKNSIVCTPHNNIFYVISGFLDLDANSCLPQHDGTVVTYKDYFKTRHGLTLTFENQPLLAGSKHVKVRNFLHNCYSKKEKEPGDRYSVELPPELCRIIMSPVSANNLHIFSYVPSIMFRIQCMLLSVKLKVQLGPTVQQFDVPVLKILEALTTKKCQEEFSQESLETLGDSFLKYVTTRHLFSEYRLQHEGILTKMKKNLISNAALCQLACSSNLVGYIHAEEFNPRDWIIPCLDYDERDNKKISFLAPNGMYSQRKMSIKSKRIADSVEALIGAYLSTAGEKAAFLLMKSLGMNIEFHTEIPVERKISMKAEEFINVRSLEGMLGYKFNDSLLLLEALTHGSYQTSGPTSCYQRLEFLGDAILDHLFTEYYYSKYPDCTPELLTDLRSASVNNNCYAHAAVKSGLNKHILHSSSELHRKMSYYLEEFGQSFTGPSYGWEAGIGLPKVLGDVIESIAGAIYLDSKCDKEVVWRSMKRLLEPLATPETIEPDPVKGLQEFCDRRSFKITYEKNHVDGVSSVIARVKAGETTYSATKSGPCKLVAKKLASKAVLKDLIAGHKDTEAAAV.

The segment covering 1–15 (MGGPLTAAGGRGDGG) has biased composition (gly residues). The disordered stretch occupies residues 1–30 (MGGPLTAAGGRGDGGAKAVEPLRPPPPPDP). The region spanning 41-222 (ALERAVRGNT…HNYSKQISEI (182 aa)) is the Helicase ATP-binding domain. Position 54-61 (54-61 (LETGSGKT)) interacts with ATP. A DECH box motif is present at residues 163–166 (DECH). The 174-residue stretch at 388-561 (TLLQYRHMQD…DTYYRVESTR (174 aa)) folds into the Helicase C-terminal domain. The Dicer dsRNA-binding fold domain occupies 569–655 (SVPLIHFFCS…LPELDVPCDE (87 aa)). The region spanning 827–942 (KDIDLLQTKD…LPPELCRIIM (116 aa)) is the PAZ domain. 2 RNase III domains span residues 969 to 1124 (SVKL…STAG) and 1161 to 1308 (VRSL…LDSK). Glu1200, Asp1294, and Glu1297 together coordinate Mg(2+). Positions 1334–1400 (DPVKGLQEFC…SKAVLKDLIA (67 aa)) constitute a DRBM domain.

This sequence belongs to the helicase family. Dicer subfamily. As to quaternary structure, may interact with ARGONAUTE1 or PINHEAD through their common PAZ domains. Mg(2+) serves as cofactor. It depends on Mn(2+) as a cofactor.

It localises to the nucleus. In terms of biological role, probably involved in the RNA silencing pathway. May cleave double-stranded RNA to produce short 21-24 nucleotides (nt) RNAs which target the selective destruction of complementary RNAs. The protein is Endoribonuclease Dicer homolog 2a (DCL2A) of Oryza sativa subsp. japonica (Rice).